A 1637-amino-acid chain; its full sequence is Serine/threonine-protein kinase Genghis Khan (1637 aa).

A Protein kinase domain is found at 100 to 369 (FDILKIIGRG…IQDFMDHPWF (270 aa)). Residues 106–114 (IGRGAFGEV) and lysine 129 each bind ATP. The active-site Proton acceptor is aspartate 224. An AGC-kinase C-terminal domain is found at 370 to 440 (VGIDWKNIRQ…SLTSSSTLDS (71 aa)). 3 coiled-coil regions span residues 473–587 (VDSV…EDAV), 643–688 (SEKL…LKYT), and 839–881 (DELS…DLQK). The interval 538-575 (RNQKQKLSRQVRDKEEELDGAMQKNDSLRNELRKSDKT) is disordered. Residues 563 to 575 (DSLRNELRKSDKT) show a composition bias toward basic and acidic residues. Threonine 895 is modified (phosphothreonine). A disordered region spans residues 952–971 (NNKDHSSMKEASVSDLSREE). Residues 989–1039 (IHQFLVRTFSSPTKCNHCTSLMVGLTRQGVVCEICGFACHTICCQKVPTTC) form a Phorbol-ester/DAG-type zinc finger. The 119-residue stretch at 1059–1177 (GTAYEGYVKV…WVIALGELHR (119 aa)) folds into the PH domain. A CNH domain is found at 1203–1489 (IRNALCSVII…LPLNNLGNVV (287 aa)). Positions 1546–1559 (ISAPTNFNHISHMG) constitute a CRIB domain. Serine 1584 bears the Phosphoserine mark. The tract at residues 1611–1637 (DYGNDNIISRTPSPMASSFMDGLSNND) is disordered. Positions 1616–1626 (NIISRTPSPMA) are enriched in polar residues.

This sequence belongs to the protein kinase superfamily. AGC Ser/Thr protein kinase family. DMPK subfamily. In terms of assembly, interacts tightly with GTP-bound but not GDP-bound Cdc42.

It carries out the reaction L-seryl-[protein] + ATP = O-phospho-L-seryl-[protein] + ADP + H(+). The catalysed reaction is L-threonyl-[protein] + ATP = O-phospho-L-threonyl-[protein] + ADP + H(+). Its function is as follows. Acts as a downstream effector for the regulation of actin polymerization by Cdc42. The polypeptide is Serine/threonine-protein kinase Genghis Khan (gek) (Drosophila melanogaster (Fruit fly)).